A 303-amino-acid polypeptide reads, in one-letter code: GTP cyclohydrolase FolE2 (303 aa).

It belongs to the GTP cyclohydrolase IV family.

The enzyme catalyses GTP + H2O = 7,8-dihydroneopterin 3'-triphosphate + formate + H(+). It participates in cofactor biosynthesis; 7,8-dihydroneopterin triphosphate biosynthesis; 7,8-dihydroneopterin triphosphate from GTP: step 1/1. Functionally, converts GTP to 7,8-dihydroneopterin triphosphate. The polypeptide is GTP cyclohydrolase FolE2 (Exiguobacterium sp. (strain ATCC BAA-1283 / AT1b)).